The sequence spans 475 residues: MSSLLKTDFNVSKYRLIAQKREANAVEIEAALEVVREFIIKKKLILYGGIAIDYALHLKGSSIYPEGERPDFDMFSPNHVEDAYELADILYEKGFKQVGTVRAIHVQTMRVRTDFVWVADLSYMPPNIFNTIPTLTYKNLKIIHPDYQRAGLHLAFCFPFDNPPREDVFSRFKKDLQRYNLIEKYYPIPVVPVKSIYESKTFSIPFKQVAIHGFAAYALLYQTLNELRITCKVPEWKTEFPQPSYSYHKNDKNITLTVDMPKAYPALVLATYNPEEVIKEMGLHLTEICEPYMDYSPPIFKTNDIHFFSTMFKELAISIIQDNLIVVSPQYLLLYFLYGAFATPADKSLFLFYYNATLWILEKADSLLNIIQKQTSPEEFTRFANTSPFVLTTRVLSCSQERCTFSPAYRISLANDVQQSQLPLPKTHFLSNSLPDVSTLPYNYYPGKGKDRPTNFSYEKNLLFNIGGKCTPSAM.

Belongs to the poxviridae poly(A) polymerase catalytic subunit family. Highly divergent.

Its subcellular location is the virion. It catalyses the reaction RNA(n) + ATP = RNA(n)-3'-adenine ribonucleotide + diphosphate. Functionally, polymerase that creates the 3'-poly(A) tail of mRNA's. The chain is Putative poly(A) polymerase catalytic subunit from Ornithodoros (relapsing fever ticks).